Here is a 354-residue protein sequence, read N- to C-terminus: Protein RecA (354 aa).

67-74 (GPESSGKT) lines the ATP pocket. Residues 333 to 354 (MNEFVPSSEEQAEASLSEDHDQ) are disordered.

It belongs to the RecA family.

Its subcellular location is the cytoplasm. Functionally, can catalyze the hydrolysis of ATP in the presence of single-stranded DNA, the ATP-dependent uptake of single-stranded DNA by duplex DNA, and the ATP-dependent hybridization of homologous single-stranded DNAs. It interacts with LexA causing its activation and leading to its autocatalytic cleavage. This Laribacter hongkongensis (strain HLHK9) protein is Protein RecA.